The primary structure comprises 214 residues: Thymidylate kinase (214 aa).

7–14 is an ATP binding site; that stretch reads GIDGAGKS.

The protein belongs to the thymidylate kinase family.

It catalyses the reaction dTMP + ATP = dTDP + ADP. Its function is as follows. Phosphorylation of dTMP to form dTDP in both de novo and salvage pathways of dTTP synthesis. The chain is Thymidylate kinase from Chlorobium luteolum (strain DSM 273 / BCRC 81028 / 2530) (Pelodictyon luteolum).